Reading from the N-terminus, the 345-residue chain is ATP-dependent (S)-NAD(P)H-hydrate dehydratase (345 aa).

Residues 9–332 enclose the YjeF C-terminal domain; the sequence is ILSLARSMIP…DMVGEVYEEV (324 aa). Residues Gly113 and 170 to 176 contribute to the (6S)-NADPHX site; that span reads NVMEFKR. ATP is bound by residues 208–212 and 241–250; these read KGPSD and GGLKRVGGQG. Position 251 (Asp251) interacts with (6S)-NADPHX.

This sequence belongs to the NnrD/CARKD family. Requires Mg(2+) as cofactor.

It localises to the cytoplasm. The catalysed reaction is (6S)-NADHX + ATP = ADP + phosphate + NADH + H(+). It catalyses the reaction (6S)-NADPHX + ATP = ADP + phosphate + NADPH + H(+). Its function is as follows. Catalyzes the dehydration of the S-form of NAD(P)HX at the expense of ATP, which is converted to ADP. Together with NAD(P)HX epimerase, which catalyzes the epimerization of the S- and R-forms, the enzyme allows the repair of both epimers of NAD(P)HX, a damaged form of NAD(P)H that is a result of enzymatic or heat-dependent hydration. In Cryptococcus neoformans var. neoformans serotype D (strain JEC21 / ATCC MYA-565) (Filobasidiella neoformans), this protein is ATP-dependent (S)-NAD(P)H-hydrate dehydratase.